Consider the following 364-residue polypeptide: Dihydroorotate dehydrogenase (quinone) (364 aa).

Residues 61-65 (AGFDK) and threonine 85 contribute to the FMN site. Lysine 65 serves as a coordination point for substrate. 110–114 (NRMGF) serves as a coordination point for substrate. FMN-binding residues include asparagine 139 and asparagine 170. Asparagine 170 contacts substrate. Serine 173 (nucleophile) is an active-site residue. Asparagine 175 lines the substrate pocket. Lysine 214 and alanine 242 together coordinate FMN. 243-244 (NT) serves as a coordination point for substrate. FMN contacts are provided by residues glycine 266, glycine 295, and 316-317 (YS).

Belongs to the dihydroorotate dehydrogenase family. Type 2 subfamily. In terms of assembly, monomer. Requires FMN as cofactor.

The protein resides in the cell membrane. The catalysed reaction is (S)-dihydroorotate + a quinone = orotate + a quinol. It functions in the pathway pyrimidine metabolism; UMP biosynthesis via de novo pathway; orotate from (S)-dihydroorotate (quinone route): step 1/1. Catalyzes the conversion of dihydroorotate to orotate with quinone as electron acceptor. This chain is Dihydroorotate dehydrogenase (quinone), found in Rhodopseudomonas palustris (strain BisB5).